Reading from the N-terminus, the 282-residue chain is Probable endonuclease 4 (282 aa).

Zn(2+) is bound by residues H66, H106, E143, D177, H180, H214, D227, H229, and E259.

The protein belongs to the AP endonuclease 2 family. Zn(2+) serves as cofactor.

It catalyses the reaction Endonucleolytic cleavage to 5'-phosphooligonucleotide end-products.. Its function is as follows. Endonuclease IV plays a role in DNA repair. It cleaves phosphodiester bonds at apurinic or apyrimidinic (AP) sites, generating a 3'-hydroxyl group and a 5'-terminal sugar phosphate. This Nitratidesulfovibrio vulgaris (strain DP4) (Desulfovibrio vulgaris) protein is Probable endonuclease 4.